The primary structure comprises 326 residues: GTP 3',8-cyclase (326 aa).

The 234-residue stretch at 7–240 folds into the Radical SAM core domain; sequence AFARKFYYLR…AQVFHHSDYQ (234 aa). Arginine 16 lines the GTP pocket. Positions 23 and 27 each coordinate [4Fe-4S] cluster. Tyrosine 29 provides a ligand contact to S-adenosyl-L-methionine. Cysteine 30 is a binding site for [4Fe-4S] cluster. Arginine 65 provides a ligand contact to GTP. Residue glycine 69 coordinates S-adenosyl-L-methionine. Threonine 96 is a binding site for GTP. An S-adenosyl-L-methionine-binding site is contributed by serine 120. Lysine 157 provides a ligand contact to GTP. Residue methionine 191 participates in S-adenosyl-L-methionine binding. Residues cysteine 254 and cysteine 257 each contribute to the [4Fe-4S] cluster site. Residue 259–261 participates in GTP binding; that stretch reads RLR. A [4Fe-4S] cluster-binding site is contributed by cysteine 271.

Belongs to the radical SAM superfamily. MoaA family. As to quaternary structure, monomer and homodimer. [4Fe-4S] cluster serves as cofactor.

The enzyme catalyses GTP + AH2 + S-adenosyl-L-methionine = (8S)-3',8-cyclo-7,8-dihydroguanosine 5'-triphosphate + 5'-deoxyadenosine + L-methionine + A + H(+). Its pathway is cofactor biosynthesis; molybdopterin biosynthesis. Functionally, catalyzes the cyclization of GTP to (8S)-3',8-cyclo-7,8-dihydroguanosine 5'-triphosphate. The chain is GTP 3',8-cyclase from Yersinia pestis.